Here is a 112-residue protein sequence, read N- to C-terminus: T cell receptor alpha variable 2 (112 aa).

The signal sequence occupies residues 1–25; the sequence is MALQSTLGAVWLGLLLNSLWKVAES. Residues 26–112 enclose the Ig-like domain; it reads KDQVFQPSTV…DAAVYYCAVE (87 aa). A disulfide bridge connects residues Cys47 and Cys109. 2 N-linked (GlcNAc...) asparagine glycosylation sites follow: Asn48 and Asn84.

In terms of assembly, alpha-beta TR is a heterodimer composed of an alpha and beta chain; disulfide-linked. The alpha-beta TR is associated with the transmembrane signaling CD3 coreceptor proteins to form the TR-CD3 (TcR or TCR). The assembly of alpha-beta TR heterodimers with CD3 occurs in the endoplasmic reticulum where a single alpha-beta TR heterodimer associates with one CD3D-CD3E heterodimer, one CD3G-CD3E heterodimer and one CD247 homodimer forming a stable octameric structure. CD3D-CD3E and CD3G-CD3E heterodimers preferentially associate with TR alpha and TR beta chains, respectively. The association of the CD247 homodimer is the last step of TcR assembly in the endoplasmic reticulum and is required for transport to the cell surface.

It is found in the cell membrane. In terms of biological role, v region of the variable domain of T cell receptor (TR) alpha chain that participates in the antigen recognition. Alpha-beta T cell receptors are antigen specific receptors which are essential to the immune response and are present on the cell surface of T lymphocytes. Recognize peptide-major histocompatibility (MH) (pMH) complexes that are displayed by antigen presenting cells (APC), a prerequisite for efficient T cell adaptive immunity against pathogens. Binding of alpha-beta TR to pMH complex initiates TR-CD3 clustering on the cell surface and intracellular activation of LCK that phosphorylates the ITAM motifs of CD3G, CD3D, CD3E and CD247 enabling the recruitment of ZAP70. In turn ZAP70 phosphorylates LAT, which recruits numerous signaling molecules to form the LAT signalosome. The LAT signalosome propagates signal branching to three major signaling pathways, the calcium, the mitogen-activated protein kinase (MAPK) kinase and the nuclear factor NF-kappa-B (NF-kB) pathways, leading to the mobilization of transcription factors that are critical for gene expression and essential for T cell growth and differentiation. The T cell repertoire is generated in the thymus, by V-(D)-J rearrangement. This repertoire is then shaped by intrathymic selection events to generate a peripheral T cell pool of self-MH restricted, non-autoaggressive T cells. Post-thymic interaction of alpha-beta TR with the pMH complexes shapes TR structural and functional avidity. The sequence is that of T cell receptor alpha variable 2 from Homo sapiens (Human).